The sequence spans 61 residues: UPF0434 protein MS0934 (61 aa).

This sequence belongs to the UPF0434 family.

The sequence is that of UPF0434 protein MS0934 from Mannheimia succiniciproducens (strain KCTC 0769BP / MBEL55E).